The sequence spans 501 residues: ATP synthase subunit alpha (501 aa).

Residue 169 to 176 coordinates ATP; that stretch reads GDRQTGKT.

It belongs to the ATPase alpha/beta chains family. As to quaternary structure, F-type ATPases have 2 components, CF(1) - the catalytic core - and CF(0) - the membrane proton channel. CF(1) has five subunits: alpha(3), beta(3), gamma(1), delta(1), epsilon(1). CF(0) has three main subunits: a(1), b(2) and c(9-12). The alpha and beta chains form an alternating ring which encloses part of the gamma chain. CF(1) is attached to CF(0) by a central stalk formed by the gamma and epsilon chains, while a peripheral stalk is formed by the delta and b chains.

Its subcellular location is the cell membrane. It catalyses the reaction ATP + H2O + 4 H(+)(in) = ADP + phosphate + 5 H(+)(out). Functionally, produces ATP from ADP in the presence of a proton gradient across the membrane. The alpha chain is a regulatory subunit. This chain is ATP synthase subunit alpha, found in Streptococcus thermophilus (strain CNRZ 1066).